Here is a 250-residue protein sequence, read N- to C-terminus: Mycofactocin precursor peptide peptidase (250 aa).

A divalent metal cation contacts are provided by glutamate 38, histidine 40, aspartate 49, histidine 127, and glutamate 166.

This sequence belongs to the creatininase superfamily. In terms of assembly, homooctamer. Requires Fe(2+) as cofactor. It depends on Zn(2+) as a cofactor.

It catalyses the reaction [mycofactocin precursor peptide]-C-terminal glycyl-N-{5-[(4-hydroxyphenyl)methyl]-4,4-dimethyl-2-oxopyrrolidin-3-yl}acetamide + H2O = [mycofactocin precursor peptide]-C-terminal glycine + 3-amino-5-[(4-hydroxyphenyl)methyl]-4,4-dimethyl-2-pyrrolidin-2-one. Functionally, peptidase involved in the biosynthesis of the enzyme cofactor mycofactocin (MFT). Catalyzes cleavage of the MftC-modified MftA peptide to liberate its final two residues, which consist of a cross-linked valine-decarboxylated tyrosine dipeptide (named 3-amino-5-[(4-hydroxyphenyl)methyl]-4,4-dimethyl-2-pyrrolidin-2-one or ADHP). The chain is Mycofactocin precursor peptide peptidase from Mycobacterium ulcerans (strain Agy99).